The chain runs to 520 residues: Polycomb protein PHO (520 aa).

4 consecutive C2H2-type zinc fingers follow at residues 357–381, 386–408, 414–438, and 444–468; these read IACP…LHTH, HVCA…QLVH, FQCT…VRIH, and FVCP…ILTH. The disordered stretch occupies residues 475 to 497; sequence TSISGKSGCSNAESNSQSEDTSA.

In terms of assembly, component of the Esc/E(z) complex, composed of Esc, E(z), Su(z)12, HDAC1/Rpd3 and Caf1-55. This complex is distinct from the PRC1 complex, which contains many other PcG proteins like Pc, Ph, Psc, Su(z)2. The two complexes however cooperate and interact together during the first 3 hours of development to establish PcG silencing. Component of the chromatin remodeling Ino80 complex. Interacts with Sfmbt to form a pho-repressive complex (PhoRC).

It localises to the nucleus. Functionally, polycomb group (PcG) protein that binds to the 5'-CNGCCATNNNNG-3' sequence found in the regulatory regions of many genes. PcG proteins act by forming multiprotein complexes, which are required to maintain the transcriptionally repressive state of homeotic genes throughout development. PcG proteins are not required to initiate repression, but to maintain it during later stages of development. They probably act via the methylation of histones, rendering chromatin heritably changed in its expressibility. Probably targets the Esc/E(z) complex to DNA. Necessary but not sufficient to recruit a functional PcG repressive complex that represses target genes, suggesting that the recruitment of the distinct PRC1 complex is also required to allow a subsequent repression. Its function is as follows. Proposed core component of the chromatin remodeling Ino80 complex which is involved in transcriptional regulation, DNA replication and probably DNA repair. The chain is Polycomb protein PHO (pho) from Drosophila melanogaster (Fruit fly).